A 482-amino-acid polypeptide reads, in one-letter code: MASKDDAGTSNVVTRFAPSPTGYLHLGGARTALFNWLFARHYGGKALLRIEDTDKKRSTQDAIDKILEGLDWLGLDYDDTPLFQSERGSRHVEVAEKLLEYGYAYRCYATQEELEQMRAAQRAAKQPQRYDGRWRHRDASEAPAGSPFVVRLKTAEDGETTIEDKVQGRVTVRNEELDDYILLRADGSPTYMLAVVVDDHDMGVTHVIRGDDHLNNAFRQLPIYHAMDTIEGGWPEPVYAHVPLIHGQDGAKLSKRHGAVGVEAYRDEMGVLPEALFNYLLRLGWGHGDQEEFTREQAIELFTLEGVGKSASRFDTKKLLNLNGHHIREADNARLAALVAAKIGPAADEALLTQAMEVLKVRAKDINELAEGAAFLFSKRPLEMTEKAEKLLDGEGRERLAKVSEALSAENDWTIEALEATTKALAERLELGLGKLAQPMRAALTGTTTSPGIFDVLVLLGREESLARIDAQATPAEEGANG.

A 'HIGH' region motif is present at residues 18-28 (PSPTGYLHLGG). Residues 252 to 256 (KLSKR) carry the 'KMSKS' region motif. Lysine 255 is an ATP binding site.

Belongs to the class-I aminoacyl-tRNA synthetase family. Glutamate--tRNA ligase type 1 subfamily. As to quaternary structure, monomer.

The protein resides in the cytoplasm. The catalysed reaction is tRNA(Glu) + L-glutamate + ATP = L-glutamyl-tRNA(Glu) + AMP + diphosphate. Functionally, catalyzes the attachment of glutamate to tRNA(Glu) in a two-step reaction: glutamate is first activated by ATP to form Glu-AMP and then transferred to the acceptor end of tRNA(Glu). This is Glutamate--tRNA ligase 1 from Erythrobacter litoralis (strain HTCC2594).